The sequence spans 412 residues: CCA-adding enzyme (412 aa).

ATP is bound by residues serine 41 and lysine 44. Positions 41 and 44 each coordinate CTP. Residues aspartate 53, aspartate 55, and aspartate 106 each contribute to the Mg(2+) site. ATP is bound by residues histidine 129, lysine 149, and tyrosine 158. CTP is bound by residues histidine 129, lysine 149, and tyrosine 158.

This sequence belongs to the tRNA nucleotidyltransferase/poly(A) polymerase family. Archaeal CCA-adding enzyme subfamily. As to quaternary structure, homodimer. Mg(2+) serves as cofactor.

The catalysed reaction is a tRNA precursor + 2 CTP + ATP = a tRNA with a 3' CCA end + 3 diphosphate. The enzyme catalyses a tRNA with a 3' CCA end + 2 CTP + ATP = a tRNA with a 3' CCACCA end + 3 diphosphate. In terms of biological role, catalyzes the addition and repair of the essential 3'-terminal CCA sequence in tRNAs without using a nucleic acid template. Adds these three nucleotides in the order of C, C, and A to the tRNA nucleotide-73, using CTP and ATP as substrates and producing inorganic pyrophosphate. tRNA 3'-terminal CCA addition is required both for tRNA processing and repair. Also involved in tRNA surveillance by mediating tandem CCA addition to generate a CCACCA at the 3' terminus of unstable tRNAs. While stable tRNAs receive only 3'-terminal CCA, unstable tRNAs are marked with CCACCA and rapidly degraded. This Saccharolobus islandicus (strain M.16.27) (Sulfolobus islandicus) protein is CCA-adding enzyme.